A 101-amino-acid polypeptide reads, in one-letter code: Protein Tat (101 aa).

The interval 1–24 (MEPVDPNLEPWKHPGSQPRTACNN) is interaction with human CREBBP. The interval 1–48 (MEPVDPNLEPWKHPGSQPRTACNNCYCKKCCFHCQVCFTKKGLGISYG) is transactivation. Positions 22, 25, and 27 each coordinate Zn(2+). The interval 22–37 (CNNCYCKKCCFHCQVC) is cysteine-rich. Lys28 is subject to N6-acetyllysine; by host PCAF. The Zn(2+) site is built by Cys30, His33, Cys34, and Cys37. A core region spans residues 38-48 (FTKKGLGISYG). The segment at 47-101 (YGRKKRRQRRRPPQDSQTHQSSLSKQPTSQLRGDPTGPTESKKKVERETETDPVH) is disordered. Residues 48-57 (GRKKRRQRRR) show a composition bias toward basic residues. The Nuclear localization signal, RNA-binding (TAR), and protein transduction signature appears at 49-57 (RKKRRQRRR). An interaction with the host capping enzyme RNGTT region spans residues 49-86 (RKKRRQRRRPPQDSQTHQSSLSKQPTSQLRGDPTGPTE). Residues Lys50 and Lys51 each carry the N6-acetyllysine; by host EP300 and GCN5L2 modification. An asymmetric dimethylarginine; by host PRMT6 mark is found at Arg52 and Arg53. A compositionally biased stretch (polar residues) spans 61-77 (DSQTHQSSLSKQPTSQL). Residue Lys71 forms a Glycyl lysine isopeptide (Lys-Gly) (interchain with G-Cter in ubiquitin) linkage. The Cell attachment site motif lies at 78 to 80 (RGD). A compositionally biased stretch (basic and acidic residues) spans 86-101 (ESKKKVERETETDPVH).

This sequence belongs to the lentiviruses Tat family. As to quaternary structure, interacts with host CCNT1. Associates with the P-TEFb complex composed at least of Tat, P-TEFb (CDK9 and CCNT1), TAR RNA, RNA Pol II. Recruits the HATs CREBBP, TAF1/TFIID, EP300, PCAF and GCN5L2. Interacts with host KAT5/Tip60; this interaction targets the latter to degradation. Interacts with the host deacetylase SIRT1. Interacts with host capping enzyme RNGTT; this interaction stimulates RNGTT. Binds to host KDR, and to the host integrins ITGAV/ITGB3 and ITGA5/ITGB1. Interacts with host KPNB1/importin beta-1 without previous binding to KPNA1/importin alpha-1. Interacts with EIF2AK2. Interacts with host nucleosome assembly protein NAP1L1; this interaction may be required for the transport of Tat within the nucleus, since the two proteins interact at the nuclear rim. Interacts with host C1QBP/SF2P32; this interaction involves lysine-acetylated Tat. Interacts with the host chemokine receptors CCR2, CCR3 and CXCR4. Interacts with host DPP4/CD26; this interaction may trigger an anti-proliferative effect. Interacts with host LDLR. Interacts with the host extracellular matrix metalloproteinase MMP1. Interacts with host PRMT6; this interaction mediates Tat's methylation. Interacts with, and is ubiquitinated by MDM2/Hdm2. Interacts with host PSMC3 and HTATIP2. Interacts with STAB1; this interaction may overcome SATB1-mediated repression of IL2 and IL2RA (interleukin) in T cells by binding to the same domain than HDAC1. Interacts (when acetylated) with human CDK13, thereby increasing HIV-1 mRNA splicing and promoting the production of the doubly spliced HIV-1 protein Nef. Interacts with host TBP; this interaction modulates the activity of transcriptional pre-initiation complex. Interacts with host RELA. Interacts with host PLSCR1; this interaction negatively regulates Tat transactivation activity by altering its subcellular distribution. Post-translationally, asymmetrical arginine methylation by host PRMT6 seems to diminish the transactivation capacity of Tat and affects the interaction with host CCNT1. In terms of processing, acetylation by EP300, CREBBP, GCN5L2/GCN5 and PCAF regulates the transactivation activity of Tat. EP300-mediated acetylation of Lys-50 promotes dissociation of Tat from the TAR RNA through the competitive binding to PCAF's bromodomain. In addition, the non-acetylated Tat's N-terminus can also interact with PCAF. PCAF-mediated acetylation of Lys-28 enhances Tat's binding to CCNT1. Lys-50 is deacetylated by SIRT1. Polyubiquitination by host MDM2 does not target Tat to degradation, but activates its transactivation function and fosters interaction with CCNT1 and TAR RNA. Post-translationally, phosphorylated by EIF2AK2 on serine and threonine residues adjacent to the basic region important for TAR RNA binding and function. Phosphorylation of Tat by EIF2AK2 is dependent on the prior activation of EIF2AK2 by dsRNA.

The protein localises to the host nucleus. It localises to the host nucleolus. It is found in the host cytoplasm. Its subcellular location is the secreted. Its function is as follows. Transcriptional activator that increases RNA Pol II processivity, thereby increasing the level of full-length viral transcripts. Recognizes a hairpin structure at the 5'-LTR of the nascent viral mRNAs referred to as the transactivation responsive RNA element (TAR) and recruits the cyclin T1-CDK9 complex (P-TEFb complex) that will in turn hyperphosphorylate the RNA polymerase II to allow efficient elongation. The CDK9 component of P-TEFb and other Tat-activated kinases hyperphosphorylate the C-terminus of RNA Pol II that becomes stabilized and much more processive. Other factors such as HTATSF1/Tat-SF1, SUPT5H/SPT5, and HTATIP2 are also important for Tat's function. Besides its effect on RNA Pol II processivity, Tat induces chromatin remodeling of proviral genes by recruiting the histone acetyltransferases (HATs) CREBBP, EP300 and PCAF to the chromatin. This also contributes to the increase in proviral transcription rate, especially when the provirus integrates in transcriptionally silent region of the host genome. To ensure maximal activation of the LTR, Tat mediates nuclear translocation of NF-kappa-B by interacting with host RELA. Through its interaction with host TBP, Tat may also modulate transcription initiation. Tat can reactivate a latently infected cell by penetrating in it and transactivating its LTR promoter. In the cytoplasm, Tat is thought to act as a translational activator of HIV-1 mRNAs. In terms of biological role, extracellular circulating Tat can be endocytosed by surrounding uninfected cells via the binding to several surface receptors such as CD26, CXCR4, heparan sulfate proteoglycans (HSPG) or LDLR. Neurons are rarely infected, but they internalize Tat via their LDLR. Through its interaction with nuclear HATs, Tat is potentially able to control the acetylation-dependent cellular gene expression. Modulates the expression of many cellular genes involved in cell survival, proliferation or in coding for cytokines or cytokine receptors. Tat plays a role in T-cell and neurons apoptosis. Tat induced neurotoxicity and apoptosis probably contribute to neuroAIDS. Circulating Tat also acts as a chemokine-like and/or growth factor-like molecule that binds to specific receptors on the surface of the cells, affecting many cellular pathways. In the vascular system, Tat binds to ITGAV/ITGB3 and ITGA5/ITGB1 integrins dimers at the surface of endothelial cells and competes with bFGF for heparin-binding sites, leading to an excess of soluble bFGF. The chain is Protein Tat from Human immunodeficiency virus type 1 group M subtype B (isolate YU-2) (HIV-1).